We begin with the raw amino-acid sequence, 352 residues long: tRNA-specific 2-thiouridylase MnmA (352 aa).

ATP-binding positions include 6–13 and L32; that span reads AMSGGVDS. C101 serves as the catalytic Nucleophile. C101 and C194 are oxidised to a cystine. Position 125 (G125) interacts with ATP. Residues 144 to 146 form an interaction with tRNA region; the sequence is KDQ. C194 serves as the catalytic Cysteine persulfide intermediate.

It belongs to the MnmA/TRMU family.

The protein localises to the cytoplasm. It catalyses the reaction S-sulfanyl-L-cysteinyl-[protein] + uridine(34) in tRNA + AH2 + ATP = 2-thiouridine(34) in tRNA + L-cysteinyl-[protein] + A + AMP + diphosphate + H(+). Functionally, catalyzes the 2-thiolation of uridine at the wobble position (U34) of tRNA, leading to the formation of s(2)U34. The protein is tRNA-specific 2-thiouridylase MnmA of Frankia casuarinae (strain DSM 45818 / CECT 9043 / HFP020203 / CcI3).